The sequence spans 344 residues: Sorting nexin-16 (344 aa).

Residues 1-10 (MATPYVPVPM) are compositionally biased toward pro residues. Disordered stretches follow at residues 1 to 49 (MATP…DSSV) and 83 to 105 (SIEY…NWED). Over residues 14–26 (NSASSFTNNRNQR) the composition is skewed to polar residues. The span at 27-40 (SSSFGSVSTSSNSS) shows a compositional bias: low complexity. Positions 88-105 (ARPRDTEEQHPDALNWED) are enriched in basic and acidic residues. Residues 105–218 (DRPSTPTILG…EFLCLDDPPG (114 aa)) enclose the PX domain. The a 1,2-diacyl-sn-glycero-3-phospho-(1D-myo-inositol-3-phosphate) site is built by Arg-144, Thr-146, and Arg-184. Ser-222 is modified (phosphoserine). Residues 223 to 278 (LEESRAFCETLEETNYHLQRELLEKQKEVESLKKLLGEKQLHIDALETRIRTLSLE) are a coiled coil.

Belongs to the sorting nexin family. Homooligomer. Interacts with EGFR.

Its subcellular location is the early endosome membrane. The protein localises to the late endosome membrane. The protein resides in the cytoplasm. It is found in the lysosome. Its function is as follows. May be involved in several stages of intracellular trafficking. Plays a role in protein transport from early to late endosomes. Plays a role in protein transport to the lysosome. Promotes degradation of EGFR after EGF signaling. In Rattus norvegicus (Rat), this protein is Sorting nexin-16 (Snx16).